Here is a 780-residue protein sequence, read N- to C-terminus: ATP-dependent 6-phosphofructokinase, muscle type (780 aa).

An N-acetylthreonine modification is found at Thr-2. The segment at 2–390 (THEEHHAAKT…NWEVYKLLAH (389 aa)) is N-terminal catalytic PFK domain 1. ATP is bound by residues Gly-25, 88-89 (RC), and 118-121 (GDGS). Residue Asp-119 participates in Mg(2+) binding. Position 133 is a phosphoserine (Ser-133). Substrate-binding positions include 164–166 (SID), Arg-201, 208–210 (MGR), Glu-264, Arg-292, and 298–301 (HVQR). The active-site Proton acceptor is the Asp-166. Ser-377 carries the post-translational modification Phosphoserine. The tract at residues 391-401 (IRPPVSKSGSH) is interdomain linker. Residues 402–780 (TVAVMNVGAP…SRKRSGEAPA (379 aa)) form a C-terminal regulatory PFK domain 2 region. Beta-D-fructose 2,6-bisphosphate is bound by residues Arg-471 and 528 to 532 (TVSNN). An O-linked (GlcNAc) serine glycan is attached at Ser-530. Lys-557 carries the N6-(2-hydroxyisobutyryl)lysine modification. Beta-D-fructose 2,6-bisphosphate contacts are provided by residues Arg-566, 573–575 (MGG), Glu-629, Arg-655, and 661–664 (HMQQ). The residue at position 667 (Ser-667) is a Phosphoserine. Residue Arg-735 participates in beta-D-fructose 2,6-bisphosphate binding. Phosphoserine is present on Ser-775.

The protein belongs to the phosphofructokinase type A (PFKA) family. ATP-dependent PFK group I subfamily. Eukaryotic two domain clade 'E' sub-subfamily. As to quaternary structure, homo- and heterotetramers. Phosphofructokinase (PFK) enzyme functions as a tetramer composed of different combinations of 3 types of subunits, called PFKM (M), PFKL (L) and PFKP (P). The composition of the PFK tetramer differs according to the tissue type it is present in. The kinetic and regulatory properties of the tetrameric enzyme are dependent on the subunit composition, hence can vary across tissues. Interacts (via C-terminus) with HK1 (via N-terminal spermatogenic cell-specific region). The cofactor is Mg(2+). In terms of processing, glcNAcylation decreases enzyme activity.

The protein resides in the cytoplasm. The enzyme catalyses beta-D-fructose 6-phosphate + ATP = beta-D-fructose 1,6-bisphosphate + ADP + H(+). The protein operates within carbohydrate degradation; glycolysis; D-glyceraldehyde 3-phosphate and glycerone phosphate from D-glucose: step 3/4. Allosterically activated by ADP, AMP, or fructose 2,6-bisphosphate, and allosterically inhibited by ATP or citrate. Functionally, catalyzes the phosphorylation of D-fructose 6-phosphate to fructose 1,6-bisphosphate by ATP, the first committing step of glycolysis. This is ATP-dependent 6-phosphofructokinase, muscle type (PFKM) from Equus caballus (Horse).